The sequence spans 192 residues: Orotate phosphoribosyltransferase (192 aa).

Residues Arg102, Lys103, Lys106, and 129-137 (EDVVTTGRS) each bind 5-phospho-alpha-D-ribose 1-diphosphate. 2 residues coordinate orotate: Thr133 and Arg161.

The protein belongs to the purine/pyrimidine phosphoribosyltransferase family. PyrE subfamily. As to quaternary structure, homodimer. Mg(2+) serves as cofactor.

The enzyme catalyses orotidine 5'-phosphate + diphosphate = orotate + 5-phospho-alpha-D-ribose 1-diphosphate. The protein operates within pyrimidine metabolism; UMP biosynthesis via de novo pathway; UMP from orotate: step 1/2. In terms of biological role, catalyzes the transfer of a ribosyl phosphate group from 5-phosphoribose 1-diphosphate to orotate, leading to the formation of orotidine monophosphate (OMP). The sequence is that of Orotate phosphoribosyltransferase from Prochlorococcus marinus (strain SARG / CCMP1375 / SS120).